The chain runs to 260 residues: Phosphatidate cytidylyltransferase (260 aa).

Transmembrane regions (helical) follow at residues 9-29, 46-66, 70-90, 102-122, 130-150, 172-192, and 196-216; these read IIAL…LMIF, MIKF…IIML, AGPW…FIVL, FMDA…FMFF, LHYI…AYLF, FIGG…FVDF, and VWIL…GDLV.

The protein belongs to the CDS family.

It is found in the cell membrane. The catalysed reaction is a 1,2-diacyl-sn-glycero-3-phosphate + CTP + H(+) = a CDP-1,2-diacyl-sn-glycerol + diphosphate. The protein operates within phospholipid metabolism; CDP-diacylglycerol biosynthesis; CDP-diacylglycerol from sn-glycerol 3-phosphate: step 3/3. The protein is Phosphatidate cytidylyltransferase (cdsA) of Staphylococcus aureus (strain COL).